A 64-amino-acid polypeptide reads, in one-letter code: Large ribosomal subunit protein uL29 (64 aa).

It belongs to the universal ribosomal protein uL29 family.

This Teredinibacter turnerae (strain ATCC 39867 / T7901) protein is Large ribosomal subunit protein uL29.